The primary structure comprises 359 residues: Alanine racemase, biosynthetic (359 aa).

Lysine 34 (proton acceptor; specific for D-alanine) is an active-site residue. Lysine 34 is modified (N6-(pyridoxal phosphate)lysine). An N6-carboxylysine modification is found at lysine 122. Substrate is bound at residue arginine 129. The active-site Proton acceptor; specific for L-alanine is the tyrosine 255. Methionine 303 serves as a coordination point for substrate.

The protein belongs to the alanine racemase family. Homodimer. Pyridoxal 5'-phosphate serves as cofactor.

It carries out the reaction L-alanine = D-alanine. The protein operates within amino-acid biosynthesis; D-alanine biosynthesis; D-alanine from L-alanine: step 1/1. It functions in the pathway cell wall biogenesis; peptidoglycan biosynthesis. Functionally, catalyzes the interconversion of L-alanine and D-alanine. Provides the D-alanine required for cell wall biosynthesis. The sequence is that of Alanine racemase, biosynthetic from Escherichia coli (strain K12).